The primary structure comprises 96 residues: Large ribosomal subunit protein bL27 (96 aa).

Residues 1–9 (MLRLDLQFF) constitute a propeptide that is removed on maturation. Positions 1-36 (MLRLDLQFFSTKKGQGSSKNGRDSESKRLGSKRADG) are disordered. The span at 8 to 19 (FFSTKKGQGSSK) shows a compositional bias: polar residues. Residues 20–35 (NGRDSESKRLGSKRAD) show a composition bias toward basic and acidic residues.

Belongs to the bacterial ribosomal protein bL27 family. The N-terminus is cleaved by ribosomal processing cysteine protease Prp.

This chain is Large ribosomal subunit protein bL27, found in Oceanobacillus iheyensis (strain DSM 14371 / CIP 107618 / JCM 11309 / KCTC 3954 / HTE831).